Reading from the N-terminus, the 208-residue chain is MEVNVYNIKGEDTGRKVTLNESIFGIEPNDHAIYLDVKQFMANQRQGTHKSKERSEISGSTRKIGRQKGGGGARRGDMNSPVLVGGGRVFGPKPRDYYFKLNKKVKTLARKSALSYKAQDNAIVVVEDFNFEAPKTKVFVEMTKNLKVSDKKLLVVLPEANKNVYLSARNIEGANVQTISGLNTYRVLNAGVVVLTESSLKAIDNILI.

The interval 44–79 (QRQGTHKSKERSEISGSTRKIGRQKGGGGARRGDMN) is disordered.

The protein belongs to the universal ribosomal protein uL4 family. In terms of assembly, part of the 50S ribosomal subunit.

Functionally, one of the primary rRNA binding proteins, this protein initially binds near the 5'-end of the 23S rRNA. It is important during the early stages of 50S assembly. It makes multiple contacts with different domains of the 23S rRNA in the assembled 50S subunit and ribosome. Its function is as follows. Forms part of the polypeptide exit tunnel. The polypeptide is Large ribosomal subunit protein uL4 (Bacteroides fragilis (strain YCH46)).